The following is a 507-amino-acid chain: ATP synthase subunit alpha, chloroplastic (507 aa).

Residue 170-177 (GDRQTGKT) participates in ATP binding.

It belongs to the ATPase alpha/beta chains family. F-type ATPases have 2 components, CF(1) - the catalytic core - and CF(0) - the membrane proton channel. CF(1) has five subunits: alpha(3), beta(3), gamma(1), delta(1), epsilon(1). CF(0) has four main subunits: a, b, b' and c.

It localises to the plastid. The protein resides in the chloroplast thylakoid membrane. The enzyme catalyses ATP + H2O + 4 H(+)(in) = ADP + phosphate + 5 H(+)(out). Its function is as follows. Produces ATP from ADP in the presence of a proton gradient across the membrane. The alpha chain is a regulatory subunit. This chain is ATP synthase subunit alpha, chloroplastic, found in Ranunculus macranthus (Large buttercup).